The sequence spans 83 residues: MHVKKDEIVVVITGKDKGKQGKVLRVLPKENRVVVEGVNVVKKHTKPSAKNPNGGIIEMEAPIHASNVMSLAKIEAKKAKKKG.

This sequence belongs to the universal ribosomal protein uL24 family. In terms of assembly, part of the 50S ribosomal subunit.

Functionally, one of two assembly initiator proteins, it binds directly to the 5'-end of the 23S rRNA, where it nucleates assembly of the 50S subunit. In terms of biological role, one of the proteins that surrounds the polypeptide exit tunnel on the outside of the subunit. This Symbiobacterium thermophilum (strain DSM 24528 / JCM 14929 / IAM 14863 / T) protein is Large ribosomal subunit protein uL24.